A 382-amino-acid chain; its full sequence is Pyrimidine monooxygenase RutA (382 aa).

Residues 68–69 (IK), Asn-134, Glu-143, 159–160 (RY), and Ser-209 contribute to the FMN site.

It belongs to the NtaA/SnaA/DszA monooxygenase family. RutA subfamily.

It catalyses the reaction uracil + FMNH2 + NADH + O2 = (Z)-3-ureidoacrylate + FMN + NAD(+) + H2O + H(+). The catalysed reaction is thymine + FMNH2 + NADH + O2 = (Z)-2-methylureidoacrylate + FMN + NAD(+) + H2O + H(+). Catalyzes the pyrimidine ring opening between N-3 and C-4 by an unusual flavin hydroperoxide-catalyzed mechanism, adding oxygen atoms in the process to yield ureidoacrylate peracid, that immediately reacts with FMN forming ureidoacrylate and FMN-N(5)-oxide. The FMN-N(5)-oxide reacts spontaneously with NADH to produce FMN. Requires the flavin reductase RutF to regenerate FMN in vivo. This chain is Pyrimidine monooxygenase RutA, found in Shigella flexneri serotype X (strain 2002017).